The sequence spans 326 residues: Glycerol-3-phosphate dehydrogenase [NAD(P)+] (326 aa).

Trp16, Arg36, Arg37, and Lys106 together coordinate NADPH. Residues Lys106 and Gly132 each coordinate sn-glycerol 3-phosphate. Ala136 is a binding site for NADPH. The sn-glycerol 3-phosphate site is built by Lys187, Asp240, Ser250, Arg251, and Asn252. Catalysis depends on Lys187, which acts as the Proton acceptor. Arg251 is a binding site for NADPH. Residues Val271 and Glu273 each contribute to the NADPH site.

This sequence belongs to the NAD-dependent glycerol-3-phosphate dehydrogenase family.

The protein resides in the cytoplasm. The catalysed reaction is sn-glycerol 3-phosphate + NAD(+) = dihydroxyacetone phosphate + NADH + H(+). It carries out the reaction sn-glycerol 3-phosphate + NADP(+) = dihydroxyacetone phosphate + NADPH + H(+). It functions in the pathway membrane lipid metabolism; glycerophospholipid metabolism. Functionally, catalyzes the reduction of the glycolytic intermediate dihydroxyacetone phosphate (DHAP) to sn-glycerol 3-phosphate (G3P), the key precursor for phospholipid synthesis. The polypeptide is Glycerol-3-phosphate dehydrogenase [NAD(P)+] (Deinococcus geothermalis (strain DSM 11300 / CIP 105573 / AG-3a)).